The primary structure comprises 169 residues: NADH-quinone oxidoreductase subunit B (169 aa).

[4Fe-4S] cluster is bound by residues cysteine 42, cysteine 43, cysteine 107, and cysteine 136.

Belongs to the complex I 20 kDa subunit family. As to quaternary structure, NDH-1 is composed of 14 different subunits. Subunits NuoB, C, D, E, F, and G constitute the peripheral sector of the complex. [4Fe-4S] cluster serves as cofactor.

It is found in the cell inner membrane. The catalysed reaction is a quinone + NADH + 5 H(+)(in) = a quinol + NAD(+) + 4 H(+)(out). In terms of biological role, NDH-1 shuttles electrons from NADH, via FMN and iron-sulfur (Fe-S) centers, to quinones in the respiratory chain. The immediate electron acceptor for the enzyme in this species is believed to be ubiquinone. Couples the redox reaction to proton translocation (for every two electrons transferred, four hydrogen ions are translocated across the cytoplasmic membrane), and thus conserves the redox energy in a proton gradient. The sequence is that of NADH-quinone oxidoreductase subunit B from Helicobacter hepaticus (strain ATCC 51449 / 3B1).